The primary structure comprises 420 residues: Glutamate-1-semialdehyde 2,1-aminomutase (420 aa).

Position 259 is an N6-(pyridoxal phosphate)lysine (Lys-259).

Belongs to the class-III pyridoxal-phosphate-dependent aminotransferase family. HemL subfamily. As to quaternary structure, homodimer. Requires pyridoxal 5'-phosphate as cofactor.

The protein localises to the cytoplasm. The enzyme catalyses (S)-4-amino-5-oxopentanoate = 5-aminolevulinate. Its pathway is porphyrin-containing compound metabolism; protoporphyrin-IX biosynthesis; 5-aminolevulinate from L-glutamyl-tRNA(Glu): step 2/2. The chain is Glutamate-1-semialdehyde 2,1-aminomutase from Nautilia profundicola (strain ATCC BAA-1463 / DSM 18972 / AmH).